Reading from the N-terminus, the 674-residue chain is Protein tesmin/TSO1-like CXC 2 (674 aa).

Polar residues-rich tracts occupy residues 1 to 16 (MDTPQKSITQIGTPIS) and 76 to 89 (THNSSSSDPTNSVE). Disordered regions lie at residues 1-20 (MDTPQKSITQIGTPISKSRF) and 69-113 (KESR…GLNI). The segment covering 95-109 (STSHEEVPAEGEDTK) has biased composition (basic and acidic residues). Positions 373 to 498 (SCKRCNCKKS…RCEGCKNAFG (126 aa)) constitute a CRC domain. 2 disordered regions span residues 504 to 529 (SIDMEAEQEEENETSEKSRTAKSQQN) and 623 to 655 (IPNIKSVSPNGKRVSPPHMESSSSGSILGRRNG). Positions 507–516 (MEAEQEEENE) are enriched in acidic residues.

Belongs to the lin-54 family. In terms of tissue distribution, ubiquitous but expressed mostly in all the aerial organs with highest expression in flowers.

The protein localises to the nucleus. Plays a role in development of both male and female reproductive tissues. In Arabidopsis thaliana (Mouse-ear cress), this protein is Protein tesmin/TSO1-like CXC 2 (TCX2).